The sequence spans 357 residues: Protein RecA (357 aa).

Residue 69 to 76 coordinates ATP; sequence GPESSGKT. Residues 337–357 form a disordered region; it reads SANSVAKNNEDDEDEDVEEEE. Acidic residues predominate over residues 346 to 357; it reads EDDEDEDVEEEE.

This sequence belongs to the RecA family.

Its subcellular location is the cytoplasm. Functionally, can catalyze the hydrolysis of ATP in the presence of single-stranded DNA, the ATP-dependent uptake of single-stranded DNA by duplex DNA, and the ATP-dependent hybridization of homologous single-stranded DNAs. It interacts with LexA causing its activation and leading to its autocatalytic cleavage. The sequence is that of Protein RecA from Nostoc sp. (strain PCC 7120 / SAG 25.82 / UTEX 2576).